We begin with the raw amino-acid sequence, 730 residues long: Catalase-peroxidase (730 aa).

Positions Trp92–Tyr225 form a cross-link, tryptophyl-tyrosyl-methioninium (Trp-Tyr) (with M-251). Catalysis depends on His93, which acts as the Proton acceptor. The tryptophyl-tyrosyl-methioninium (Tyr-Met) (with W-92) cross-link spans Tyr225 to Met251. His266 is a heme b binding site.

It belongs to the peroxidase family. Peroxidase/catalase subfamily. As to quaternary structure, homodimer or homotetramer. Heme b serves as cofactor. Post-translationally, formation of the three residue Trp-Tyr-Met cross-link is important for the catalase, but not the peroxidase activity of the enzyme.

It localises to the cytoplasm. The catalysed reaction is H2O2 + AH2 = A + 2 H2O. It catalyses the reaction 2 H2O2 = O2 + 2 H2O. Functionally, bifunctional enzyme with both catalase and broad-spectrum peroxidase activity. This chain is Catalase-peroxidase, found in Blumeria hordei (Barley powdery mildew).